The following is a 180-amino-acid chain: Ribulose bisphosphate carboxylase small subunit, chloroplastic 2 (180 aa).

Residues 1–54 (MASMMSNAAVVGRTTPAQASMVAPFTGLKSVSAFPVTKKSNDITSIASNGGRVQ) constitute a chloroplast transit peptide.

This sequence belongs to the RuBisCO small chain family. Heterohexadecamer of 8 large and 8 small subunits.

The protein localises to the plastid. It is found in the chloroplast. Functionally, ruBisCO catalyzes two reactions: the carboxylation of D-ribulose 1,5-bisphosphate, the primary event in carbon dioxide fixation, as well as the oxidative fragmentation of the pentose substrate. Both reactions occur simultaneously and in competition at the same active site. Although the small subunit is not catalytic it is essential for maximal activity. The protein is Ribulose bisphosphate carboxylase small subunit, chloroplastic 2 of Mesembryanthemum crystallinum (Common ice plant).